Reading from the N-terminus, the 87-residue chain is Large ribosomal subunit protein bL27 (87 aa).

The protein belongs to the bacterial ribosomal protein bL27 family.

The polypeptide is Large ribosomal subunit protein bL27 (Stenotrophomonas maltophilia (strain R551-3)).